We begin with the raw amino-acid sequence, 356 residues long: MAAPISLKWEEHSLHENKFVRDEDERPKVPYNTFSNEIPVISLAGIDGCRRAEICDEIVKACEDWGIFQVVDHGVDTKLLSDMTGLARDFFHLPTQEKLRFDMTGGKKGGFIVSSHLQGEAVQDWREIVTYFSYPIKARDYSRWPDKPNEWRAVTEEYSKVLMGLACKLLEVLSEAMGLEKEALTKACVDMDQKVVVNYYPKCPQPDLTLGLKRHTDPGTITLLLQDQVGGLQATRDGGESWITVKPVEGAFVVNLGDHGHYLSNGRFKNADHQAVVNSSTSRLSIATFQNPAPEAIVYPLKINEGEKSIMEEPMTFMEMYKKKMSTDLELARLKKLAKDKQQDLEVVKPIQNIFA.

Residues 188-292 form the Fe2OG dioxygenase domain; it reads CVDMDQKVVV…RLSIATFQNP (105 aa). His-215, Asp-217, and His-273 together coordinate Fe cation. Arg-283 serves as a coordination point for 2-oxoglutarate.

Belongs to the iron/ascorbate-dependent oxidoreductase family. Fe(2+) is required as a cofactor. It depends on L-ascorbate as a cofactor.

It carries out the reaction a (2S)-flavan-4-one + 2-oxoglutarate + O2 = a (2R,3R)-dihydroflavonol + succinate + CO2. Its pathway is secondary metabolite biosynthesis; flavonoid biosynthesis. In terms of biological role, catalyzes the 3-beta-hydroxylation of 2S-flavanones to 2R,3R-dihydroflavonols which are intermediates in the biosynthesis of flavonols, anthocyanidins, catechins and proanthocyanidins in plants. This chain is Naringenin,2-oxoglutarate 3-dioxygenase (FHT), found in Callistephus chinensis (China aster).